A 298-amino-acid chain; its full sequence is Multifunctional dioxygenase ausE (298 aa).

Positions 72 and 127 each coordinate substrate. Residues His130 and Asp132 each contribute to the Fe cation site. Substrate is bound at residue Thr167. His214 is a binding site for Fe cation. A substrate-binding site is contributed by Arg226.

Belongs to the PhyH family. Homodimer. Fe cation serves as cofactor.

It carries out the reaction preaustinoid A1 + 2-oxoglutarate + O2 = preaustinoid A2 + succinate + CO2 + H2O. The catalysed reaction is preaustinoid A2 + 2-oxoglutarate + O2 = preaustinoid A3 + succinate + CO2 + H2O. The enzyme catalyses berkeleyone A + 2-oxoglutarate + O2 = preaustinoid A + succinate + CO2 + H2O. It participates in secondary metabolite biosynthesis; terpenoid biosynthesis. Its function is as follows. Multifunctional dioxygenase; part of the gene cluster that mediates the biosynthesis of calidodehydroaustin, a fungal meroterpenoid. The first step of the pathway is the synthesis of 3,5-dimethylorsellinic acid by the polyketide synthase ausA. 3,5-dimethylorsellinic acid is then prenylated by the polyprenyl transferase ausN. Further epoxidation by the FAD-dependent monooxygenase ausM and cyclization by the probable terpene cyclase ausL lead to the formation of protoaustinoid A. Protoaustinoid A is then oxidized to spiro-lactone preaustinoid A3 by the combined action of the FAD-binding monooxygenases ausB and ausC, and the dioxygenase ausE. Acid-catalyzed keto-rearrangement and ring contraction of the tetraketide portion of preaustinoid A3 by ausJ lead to the formation of preaustinoid A4. The aldo-keto reductase ausK, with the help of ausH, is involved in the next step by transforming preaustinoid A4 into isoaustinone which is in turn hydroxylated by the P450 monooxygenase ausI to form austinolide. The cytochrome P450 monooxygenase ausG modifies austinolide to austinol. Austinol is further acetylated to austin by the O-acetyltransferase ausP, which spontaneously changes to dehydroaustin. The cytochrome P450 monooxygenase ausR then converts dehydroaustin is into 7-dehydrodehydroaustin. The hydroxylation catalyzed by ausR permits the O-acetyltransferase ausQ to add an additional acetyl group to the molecule, leading to the formation of acetoxydehydroaustin. The short chain dehydrogenase ausT catalyzes the reduction of the double bond present between carbon atoms 1 and 2 to convert 7-dehydrodehydroaustin into 1,2-dihydro-7-hydroxydehydroaustin. AusQ catalyzes not only an acetylation reaction but also the addition of the PKS ausV diketide product to 1,2-dihydro-7-hydroxydehydroaustin, forming precalidodehydroaustin. Finally, the iron/alpha-ketoglutarate-dependent dioxygenase converts precalidodehydroaustin into calidodehydroaustin. This Aspergillus calidoustus protein is Multifunctional dioxygenase ausE.